We begin with the raw amino-acid sequence, 309 residues long: Solute carrier family 25 member 48 (309 aa).

Solcar repeat units lie at residues 3 to 86 (VFQL…TQRL), 99 to 209 (CSML…FCNW), and 218 to 305 (PPPC…SLQF). 6 consecutive transmembrane segments (helical) span residues 9-29 (FLAGWIGGASSVIVGHPLDTV), 61-81 (GLSFPLASITLYNSMVFGFFS), 105-125 (TVASMLTGLVSVGVGAPVDLV), 186-206 (GAMILRDIPGYALYFIPYTLF), 218-238 (PPPCCIWLAGGLAGSISWVTA), and 281-299 (ATVNAIRGFPMCATMFLGY).

It belongs to the mitochondrial carrier (TC 2.A.29) family.

It localises to the mitochondrion inner membrane. The protein is Solute carrier family 25 member 48 (slc25a48) of Danio rerio (Zebrafish).